The sequence spans 152 residues: Melatonin receptor type 1B (152 aa).

At 1-12 (HSFVYEKLFSLW) the chain is on the cytoplasmic side. The helical transmembrane segment at 13–33 (NTILYVCLIWTLTVVATVPNF) threads the bilayer. At 34 to 57 (FVGSLEYDPRIYSCTFVQTVSSSY) the chain is on the extracellular side. Residues 58–78 (TITVVVIHFILPITVVTFCYL) form a helical membrane-spanning segment. The Cytoplasmic segment spans residues 79–110 (RIWILVIQVRRKVKSEFKPRMKQSDFRNFLTM). The chain crosses the membrane as a helical span at residues 111–131 (FVVFVIFAFCWAPLNFIGLAV). At 132–144 (SINPTEVAPKIPE) the chain is on the extracellular side. A helical transmembrane segment spans residues 145–152 (WLFVVSYF).

It belongs to the G-protein coupled receptor 1 family.

It localises to the cell membrane. Functionally, high affinity receptor for melatonin. The activity of this receptor is mediated by pertussis toxin sensitive G proteins that inhibits adenylate cyclase activity. The protein is Melatonin receptor type 1B (mtnr1b) of Xenopus laevis (African clawed frog).